The sequence spans 329 residues: Carbonic anhydrase (329 aa).

Residues Met-1–Ala-108 are chloroplast transit peptide-like.

Belongs to the beta-class carbonic anhydrase family. As to quaternary structure, homohexamer.

Its subcellular location is the cytoplasm. The catalysed reaction is hydrogencarbonate + H(+) = CO2 + H2O. Reversible hydration of carbon dioxide. The protein is Carbonic anhydrase of Flaveria pringlei.